Reading from the N-terminus, the 916-residue chain is MTDSNDDKTLSVTGKKTLTLKPSGMSQGTVRQDMGRGRTKAVVVETRKRRPMRPEDEKPITPATPAAPVRAAEPAPAPAQARPQQSTPAPRIHQPGGQANQRPQQSYQPPRANDRPRPVVLNHLSPEEMDARRRALAESQARDAQDAIRRAEEEKRRAAEEAVRKAAEAEEAARRAVEEAARQAEAAAAAAAEPAVTAPAPAPVTAEARPNTSPRPAAPAPAARRPDADGAAARPAPGAPAAVRGRRNDGDDDDRGASRGGPARGRVVRPEPAKPVTTRPKTDEERRRGKLTITTADVDGEDAGRSRSLSAMRRRQEKFRRSQVQETREKISREVVLPETITIQELSQRMSERAVDVIKYLMKEGQMMKPGDVIDADLAELIAGEFGHTVKRVSESDVELGIFNIADVEGDRVSRPPVVTIMGHVDHGKTSLLDAIRHANVVAGEAGGITQHIGAYQVEQNGQKITFIDTPGHAAFTAMRARGAQATDIAILVVAADDSVMPQTIESINHAKAAGVPIIVAINKIDKHEADPQKVRNQLLQHEVFVESMGGETLDVEVSAKTGKNLDKLLEAVLLQAEILDLKANPNRTAEGTVIEAQLDRGRGAVATVLVQNGTLKPGQIIVAGDVWGRVRALVNDKGEHMKEAPPAMPVEVLGLSGTPQAGDKFAVVESESRAREISEYRQRLARDKAAARQSGQRGSLEQMMTQMQSTGIKEFPLVIKGDVQGSIEAIAGALEKLGTDEVRARIVHLGAGGITESDISLAEASNAAIIGFNVRANAQARQFAERQGIEIRYYNIIYDLVDDVKAAMSGLLSPERRETFIGNAEILEVFNITKVGKVAGCRVVEGKVERGAGVRLIRNDVVVHEGKLKTLKRFKDEVSEVPMGQECGMAFENYEDMRVGDVIECFRVEHITRTL.

The disordered stretch occupies residues 1-325 (MTDSNDDKTL…QEKFRRSQVQ (325 aa)). Over residues 60 to 91 (ITPATPAAPVRAAEPAPAPAQARPQQSTPAPR) the composition is skewed to low complexity. Over residues 97–108 (GQANQRPQQSYQ) the composition is skewed to polar residues. A compositionally biased stretch (basic and acidic residues) spans 125-182 (SPEEMDARRRALAESQARDAQDAIRRAEEEKRRAAEEAVRKAAEAEEAARRAVEEAAR). Low complexity-rich tracts occupy residues 183 to 209 (QAEA…AEAR) and 229 to 243 (DGAA…PAAV). The tr-type G domain maps to 414–581 (SRPPVVTIMG…AVLLQAEILD (168 aa)). The segment at 423-430 (GHVDHGKT) is G1. A GTP-binding site is contributed by 423-430 (GHVDHGKT). The segment at 448–452 (GITQH) is G2. Residues 469–472 (DTPG) are G3. GTP is bound by residues 469-473 (DTPGH) and 523-526 (NKID). Positions 523-526 (NKID) are G4. The tract at residues 559 to 561 (SAK) is G5.

Belongs to the TRAFAC class translation factor GTPase superfamily. Classic translation factor GTPase family. IF-2 subfamily.

It localises to the cytoplasm. One of the essential components for the initiation of protein synthesis. Protects formylmethionyl-tRNA from spontaneous hydrolysis and promotes its binding to the 30S ribosomal subunits. Also involved in the hydrolysis of GTP during the formation of the 70S ribosomal complex. In Rhizobium etli (strain ATCC 51251 / DSM 11541 / JCM 21823 / NBRC 15573 / CFN 42), this protein is Translation initiation factor IF-2.